The sequence spans 90 residues: Molybdopterin synthase sulfur carrier subunit (90 aa).

Position 90 is a 1-thioglycine; alternate (glycine 90). At glycine 90 the chain carries Glycyl adenylate; alternate.

It belongs to the MoaD family. MOCS2A subfamily. Heterotetramer; composed of 2 small (Mocs2A) and 2 large (Mocs2B) subunits. In terms of processing, C-terminal thiocarboxylation occurs in 2 steps, it is first acyl-adenylated (-COAMP) via the hesA/moeB/thiF part of MOCS3, then thiocarboxylated (-COSH) via the rhodanese domain of MOCS3.

The protein localises to the cytoplasm. It functions in the pathway cofactor biosynthesis; molybdopterin biosynthesis. In terms of biological role, acts as a sulfur carrier required for molybdopterin biosynthesis. Component of the molybdopterin synthase complex that catalyzes the conversion of precursor Z into molybdopterin by mediating the incorporation of 2 sulfur atoms into precursor Z to generate a dithiolene group. In the complex, serves as sulfur donor by being thiocarboxylated (-COSH) at its C-terminus by MOCS3. After interaction with Mocs2B, the sulfur is then transferred to precursor Z to form molybdopterin. The protein is Molybdopterin synthase sulfur carrier subunit of Drosophila simulans (Fruit fly).